The primary structure comprises 381 residues: Cytochrome b (381 aa).

Helical transmembrane passes span Phe33 to Met53, Trp77 to Val98, Trp113 to Leu133, and Phe178 to Leu198. The heme b site is built by His83 and His97. Heme b is bound by residues His182 and His196. Position 201 (His201) interacts with a ubiquinone. The next 4 helical transmembrane spans lie at Ile226–Ser246, Leu288–His308, Ile320–Gly340, and Phe347–Pro367.

The protein belongs to the cytochrome b family. In terms of assembly, the cytochrome bc1 complex contains 11 subunits: 3 respiratory subunits (MT-CYB, CYC1 and UQCRFS1), 2 core proteins (UQCRC1 and UQCRC2) and 6 low-molecular weight proteins (UQCRH/QCR6, UQCRB/QCR7, UQCRQ/QCR8, UQCR10/QCR9, UQCR11/QCR10 and a cleavage product of UQCRFS1). This cytochrome bc1 complex then forms a dimer. It depends on heme b as a cofactor.

The protein resides in the mitochondrion inner membrane. Functionally, component of the ubiquinol-cytochrome c reductase complex (complex III or cytochrome b-c1 complex) that is part of the mitochondrial respiratory chain. The b-c1 complex mediates electron transfer from ubiquinol to cytochrome c. Contributes to the generation of a proton gradient across the mitochondrial membrane that is then used for ATP synthesis. This chain is Cytochrome b (MT-CYB), found in Dasykaluta rosamondae (Little red marsupial mouse).